A 54-amino-acid chain; its full sequence is Small ribosomal subunit protein uS14 (54 aa).

Zn(2+) is bound by residues Cys-19, Cys-22, Cys-37, and Cys-40.

The protein belongs to the universal ribosomal protein uS14 family. Zinc-binding uS14 subfamily. As to quaternary structure, part of the 30S ribosomal subunit. Requires Zn(2+) as cofactor.

In terms of biological role, binds 16S rRNA, required for the assembly of 30S particles. The protein is Small ribosomal subunit protein uS14 of Pyrobaculum aerophilum (strain ATCC 51768 / DSM 7523 / JCM 9630 / CIP 104966 / NBRC 100827 / IM2).